Reading from the N-terminus, the 153-residue chain is Aspartate carbamoyltransferase regulatory chain (153 aa).

4 residues coordinate Zn(2+): Cys-109, Cys-114, Cys-138, and Cys-141.

It belongs to the PyrI family. As to quaternary structure, contains catalytic and regulatory chains. Zn(2+) serves as cofactor.

Involved in allosteric regulation of aspartate carbamoyltransferase. This is Aspartate carbamoyltransferase regulatory chain from Salmonella schwarzengrund (strain CVM19633).